A 99-amino-acid polypeptide reads, in one-letter code: Large ribosomal subunit protein uL23 (99 aa).

It belongs to the universal ribosomal protein uL23 family. In terms of assembly, part of the 50S ribosomal subunit. Contacts protein L29, and trigger factor when it is bound to the ribosome.

Its function is as follows. One of the early assembly proteins it binds 23S rRNA. One of the proteins that surrounds the polypeptide exit tunnel on the outside of the ribosome. Forms the main docking site for trigger factor binding to the ribosome. This Clavibacter michiganensis subsp. michiganensis (strain NCPPB 382) protein is Large ribosomal subunit protein uL23.